A 567-amino-acid chain; its full sequence is MGQSSSISSSNEEGSSHSKKFTNSKDILAYFNNKAQQQVTIPELVSFKGNLQIEDLNTPISHKALCNSLYFPQNHAMIVGIVTNMLRVLSNFPLMKSSYEPITGYGLLKCILLLNRARCAKFLKTKSYDQLKLLFISLSLQKTDKEELSEESENDGNKELTIKQIITGFDDVDTEMLCIPADFMLQFLTWLLILTVDCPTTNSKLDNTETHDQWGNFKVSALNLLRTMNPDVVGDIESHSITFQQFSTAIRTVMPNLLKPLENLMEHFFYLQHDLVDHDTNLSSIQDSKVMTPALLAQLSTGLPKELFIHKLQSLYIGRKSGFSMRSLQAKVFKWMAPSILVVSGMRITNSEEYAAEKNPRYRHFLEEFPKLKESDQMMDASHLNKRKTTFAVYIDDPWKVTNKDYFGDLNTRIIEISPRQDIYKVNQKGTIYFNTIGGGIGIGDKQPLIKPASKRYIPGNVSLTFDSTLEFAVFRNTGYGGSLDPGLLSMERKEENSPYELHFLIQDVEVWGCGGEKELEEQIKQLEWEEAESKRRQQINLRSLGEDRALLEMAGLVGQHQGGGSM.

The TLDc domain maps to 289–515 (KVMTPALLAQ…IQDVEVWGCG (227 aa)).

Belongs to the RTC5 family.

The protein localises to the cytoplasm. May be involved in a process influencing telomere capping. This chain is Restriction of telomere capping protein 5 (RTC5), found in Saccharomyces cerevisiae (strain RM11-1a) (Baker's yeast).